The following is a 446-amino-acid chain: Sterile alpha motif domain-containing protein 7 (446 aa).

A required for localization to nuclear polycomb bodies region spans residues 94-168 (HTARTEMEMY…NLQGNPMLAA (75 aa)). Disordered regions lie at residues 187–207 (NTGNQKALDSDAESSKSQAEE) and 225–277 (KDPD…AWDD). Over residues 232–249 (PSNQKSSETNEKPTTALA) the composition is skewed to polar residues. Residues 327-392 (WTVDDVHSFI…SQVSQHVGSM (66 aa)) enclose the SAM domain.

In terms of assembly, monomer, homodimer and homooligomer. Component of a Polycomb group (PcG) multiprotein PRC1-like complex. Interacts with PHC2, NR2E3 and SAMD11. Interacts with RNF1 in a PHC2-dependent manner. In terms of tissue distribution, expressed in the retina (at protein level). Expressed in the retinal inner and outer nuclear layers.

The protein localises to the nucleus. Its subcellular location is the cytoplasm. Functionally, component of a Polycomb group (PcG) multiprotein PRC1-like complex, essential for establishing rod photoreceptor cell identity and function by silencing nonrod gene expression in developing rod photoreceptor cells. Via its association with the PRC1-like complex, promotes epigenetic repressive marks H3K27me3 and H2AK119ub marks in nonrod genes, silencing their transcription. Represses Crx-controlled photoreceptor-specific gene expression. In Homo sapiens (Human), this protein is Sterile alpha motif domain-containing protein 7 (SAMD7).